The sequence spans 158 residues: GTP-dependent dephospho-CoA kinase (158 aa).

Positions 35, 36, 54, 56, 109, and 132 each coordinate GTP.

The protein belongs to the GTP-dependent DPCK family.

The catalysed reaction is 3'-dephospho-CoA + GTP = GDP + CoA + H(+). It functions in the pathway cofactor biosynthesis; coenzyme A biosynthesis. In terms of biological role, catalyzes the GTP-dependent phosphorylation of the 3'-hydroxyl group of dephosphocoenzyme A to form coenzyme A (CoA). The sequence is that of GTP-dependent dephospho-CoA kinase from Methanococcus maripaludis (strain C7 / ATCC BAA-1331).